A 549-amino-acid chain; its full sequence is Glucose-6-phosphate isomerase (549 aa).

An N6-acetyllysine mark is found at Lys-80, Lys-228, and Lys-234. The active-site Proton donor is the Glu-355. Catalysis depends on residues His-386 and Lys-514.

The protein belongs to the GPI family.

Its subcellular location is the cytoplasm. The enzyme catalyses alpha-D-glucose 6-phosphate = beta-D-fructose 6-phosphate. The protein operates within carbohydrate biosynthesis; gluconeogenesis. It functions in the pathway carbohydrate degradation; glycolysis; D-glyceraldehyde 3-phosphate and glycerone phosphate from D-glucose: step 2/4. Functionally, catalyzes the reversible isomerization of glucose-6-phosphate to fructose-6-phosphate. This is Glucose-6-phosphate isomerase from Escherichia coli (strain SE11).